The chain runs to 727 residues: 5'-AMP-activated serine/threonine-protein kinase catalytic subunit alpha (727 aa).

The region spanning Tyr31–Phe284 is the Protein kinase domain. ATP contacts are provided by residues Leu37–Val45 and Lys60. The active-site Proton acceptor is the Asp154. Thr188 bears the Phosphothreonine mark. A disordered region spans residues Phe382–Gly590. 2 stretches are compositionally biased toward low complexity: residues Ser391–Ser483 and Asn494–Ser586. A KA1 domain is found at Arg679–Leu727.

This sequence belongs to the protein kinase superfamily. CAMK Ser/Thr protein kinase family. SNF1 subfamily. In terms of assembly, heterotrimer of an alpha catalytic subunit, a beta and a gamma non-catalytic subunits.

The catalysed reaction is L-seryl-[protein] + ATP = O-phospho-L-seryl-[protein] + ADP + H(+). It carries out the reaction L-threonyl-[protein] + ATP = O-phospho-L-threonyl-[protein] + ADP + H(+). In terms of biological role, activated enzyme phosphorylates target proteins and initiates downstream signaling pathways that shift metabolism from anabolic to catabolic pathways. Acts as a highly sensitive cellular energy sensor. The polypeptide is 5'-AMP-activated serine/threonine-protein kinase catalytic subunit alpha (snfA) (Dictyostelium discoideum (Social amoeba)).